The sequence spans 233 residues: Gamma-interferon-responsive lysosomal thiol protein (233 aa).

Positions 1–26 are cleaved as a signal peptide; it reads MVSSSLTKLVFFGCLLLLTFTDNLVA. C42 and C45 are disulfide-bonded. Residues N80 and N207 are each glycosylated (N-linked (GlcNAc...) asparagine). Positions 200 to 233 are cleaved as a propeptide — removed in mature form; it reads TTLPKVCNSSASMSKSPERKWKLQVSYANKATNY.

The protein belongs to the GILT family. Dimer; disulfide-linked. As to expression, expressed in the outer integument of seed coat.

Its subcellular location is the secreted. The protein localises to the lysosome. Lysosomal thiol reductase that can reduce protein disulfide bonds. May facilitate the complete unfolding of proteins destined for lysosomal degradation. The polypeptide is Gamma-interferon-responsive lysosomal thiol protein (Arabidopsis thaliana (Mouse-ear cress)).